Reading from the N-terminus, the 429-residue chain is UDP-N-acetylglucosamine 1-carboxyvinyltransferase (429 aa).

22-23 (KN) contributes to the phosphoenolpyruvate binding site. Arginine 102 provides a ligand contact to UDP-N-acetyl-alpha-D-glucosamine. Residue cysteine 126 is the Proton donor of the active site. A 2-(S-cysteinyl)pyruvic acid O-phosphothioketal modification is found at cysteine 126. Residues aspartate 316 and isoleucine 338 each contribute to the UDP-N-acetyl-alpha-D-glucosamine site.

It belongs to the EPSP synthase family. MurA subfamily.

It localises to the cytoplasm. The catalysed reaction is phosphoenolpyruvate + UDP-N-acetyl-alpha-D-glucosamine = UDP-N-acetyl-3-O-(1-carboxyvinyl)-alpha-D-glucosamine + phosphate. It participates in cell wall biogenesis; peptidoglycan biosynthesis. Cell wall formation. Adds enolpyruvyl to UDP-N-acetylglucosamine. This Methylorubrum extorquens (strain PA1) (Methylobacterium extorquens) protein is UDP-N-acetylglucosamine 1-carboxyvinyltransferase.